A 247-amino-acid chain; its full sequence is Coiled-coil domain-containing protein 124 homolog (247 aa).

The interval 1–146 (MGGKKFGTNS…TTTTGSDDHE (146 aa)) is disordered. The stretch at 8–85 (TNSKAEEARS…QEDKEIKERY (78 aa)) forms a coiled coil. Over residues 11–114 (KAEEARSKKA…EQKQREKELA (104 aa)) the composition is skewed to basic and acidic residues. Positions 122–140 (VVVVPTTTTTTTTTTTTTT) are enriched in low complexity.

The protein belongs to the CCDC124 family. Associates with translationally inactive ribosomes in the nonrotated state.

Functionally, ribosome-binding protein involved in ribosome hibernation: associates with translationally inactive ribosomes and stabilizes the nonrotated conformation of the 80S ribosome, thereby promoting ribosome preservation and storage. The protein is Coiled-coil domain-containing protein 124 homolog of Dictyostelium discoideum (Social amoeba).